The following is a 463-amino-acid chain: Glutamate--tRNA ligase 1 (463 aa).

Residues 10-20 (PSPTGYLHIGG) carry the 'HIGH' region motif. Positions 238–242 (KLSKR) match the 'KMSKS' region motif. Lys241 is a binding site for ATP.

The protein belongs to the class-I aminoacyl-tRNA synthetase family. Glutamate--tRNA ligase type 1 subfamily. As to quaternary structure, monomer.

It is found in the cytoplasm. It catalyses the reaction tRNA(Glu) + L-glutamate + ATP = L-glutamyl-tRNA(Glu) + AMP + diphosphate. Its function is as follows. Catalyzes the attachment of glutamate to tRNA(Glu) in a two-step reaction: glutamate is first activated by ATP to form Glu-AMP and then transferred to the acceptor end of tRNA(Glu). This is Glutamate--tRNA ligase 1 from Helicobacter pylori (strain G27).